The primary structure comprises 234 residues: Uridylate kinase (234 aa).

Residue 9–12 (KLSG) coordinates ATP. Glycine 51 contributes to the UMP binding site. Glycine 52 and arginine 56 together coordinate ATP. UMP is bound by residues aspartate 71 and 132–139 (CGNPFFTT). Residues threonine 159, tyrosine 165, and aspartate 168 each coordinate ATP.

The protein belongs to the UMP kinase family. Homohexamer.

The protein resides in the cytoplasm. The catalysed reaction is UMP + ATP = UDP + ADP. It functions in the pathway pyrimidine metabolism; CTP biosynthesis via de novo pathway; UDP from UMP (UMPK route): step 1/1. Inhibited by UTP. Its function is as follows. Catalyzes the reversible phosphorylation of UMP to UDP. The polypeptide is Uridylate kinase (Prochlorococcus marinus subsp. pastoris (strain CCMP1986 / NIES-2087 / MED4)).